The chain runs to 448 residues: Gamma conglutin 2 (448 aa).

Positions 1-33 are cleaved as a signal peptide; it reads MAKNMAQIFPFIAVFLSCSFIFVLSSSQNSQSL. A Peptidase A1 domain is found at 63-428; the sequence is HWANIHKRTP…DLERSRVEFN (366 aa). Disulfide bonds link C91–C181, C105–C118, C110–C136, C121–C131, and C349–C390. N133 carries N-linked (GlcNAc...) asparagine glycosylation.

It belongs to the peptidase A1 family. Two-subunit monomeric unit made of alpha and beta subunits coupled by disulfide bonds (at pH 4.5 and under non-reducing conditions). Can also form oligomers including dimer, tetramer and cyclic hexamer (trimer of dimers) (at pH &gt; 5.5). Component of globulins complexes which accumulate in seeds. Interacts with flavonoids (e.g. apigenin glucosides) present in globulins complexes. In terms of processing, glycosylated on alpha chain. Expressed in developing seeds and in the young roots and cotyledons of germinating seeds and young seedlings.

The protein localises to the secreted. The protein resides in the extracellular space. In terms of biological role, sulfur-rich seed storage protein that remains undegraded at germination. The chain is Gamma conglutin 2 from Lupinus albus (White lupine).